The chain runs to 178 residues: Germinal center-associated signaling and motility protein (178 aa).

Residue serine 99 is modified to Phosphoserine. Phosphotyrosine is present on tyrosine 148.

As to quaternary structure, interacts with ACTB and MYH2; the interaction with MYH2 is increased by IL6-induced phosphorylation. Interacts (via C-terminus) with ARHGEF11 (via DH domain). Interacts with ARHGEF12. Interacts with SYK; the interaction increases after B-cell receptor stimulation, resulting in enhanced SYK autophosphorylation and activity. Phosphorylation on tyrosine residues can be induced by IL6. Phosphorylation is mediated by LYN. Post-translationally, targeted by the ubiquitin E3 ligase subunit FBXO10 to mediate its ubiquitination and degradation. As to expression, expressed in diffuse large B-cell lymphoma (DLBCL) and several germinal center (GC)-like lymphoma cell lines (at protein level). Highly expressed in normal GC lymphocytes and GC-derived malignancies. Expressed in thymus and spleen.

Its subcellular location is the cytoplasm. It localises to the cell membrane. Involved in the negative regulation of lymphocyte motility. It mediates the migration-inhibitory effects of IL6. Serves as a positive regulator of the RhoA signaling pathway. Enhancement of RhoA activation results in inhibition of lymphocyte and lymphoma cell motility by activation of its downstream effector ROCK. Is a regulator of B-cell receptor signaling, that acts through SYK kinase activation. This Homo sapiens (Human) protein is Germinal center-associated signaling and motility protein (GCSAM).